The sequence spans 467 residues: 3-isopropylmalate dehydratase large subunit (467 aa).

3 residues coordinate [4Fe-4S] cluster: Cys-348, Cys-409, and Cys-412. Residues 423–449 form a disordered region; sequence NERSISTSNRNFEGRQGKGSRTHLASP.

It belongs to the aconitase/IPM isomerase family. LeuC type 1 subfamily. Heterodimer of LeuC and LeuD. [4Fe-4S] cluster is required as a cofactor.

The enzyme catalyses (2R,3S)-3-isopropylmalate = (2S)-2-isopropylmalate. It functions in the pathway amino-acid biosynthesis; L-leucine biosynthesis; L-leucine from 3-methyl-2-oxobutanoate: step 2/4. Catalyzes the isomerization between 2-isopropylmalate and 3-isopropylmalate, via the formation of 2-isopropylmaleate. This chain is 3-isopropylmalate dehydratase large subunit, found in Bifidobacterium longum subsp. infantis (strain ATCC 15697 / DSM 20088 / JCM 1222 / NCTC 11817 / S12).